Reading from the N-terminus, the 203-residue chain is Small ribosomal subunit protein uS7 (203 aa).

The tract at residues 1-21 (MSSEAPEPDAPASTDDERVSA) is disordered.

This sequence belongs to the universal ribosomal protein uS7 family. Part of the 30S ribosomal subunit.

In terms of biological role, one of the primary rRNA binding proteins, it binds directly to 16S rRNA where it nucleates assembly of the head domain of the 30S subunit. Is located at the subunit interface close to the decoding center. The chain is Small ribosomal subunit protein uS7 from Natronomonas pharaonis (strain ATCC 35678 / DSM 2160 / CIP 103997 / JCM 8858 / NBRC 14720 / NCIMB 2260 / Gabara) (Halobacterium pharaonis).